Consider the following 352-residue polypeptide: S-adenosylmethionine:tRNA ribosyltransferase-isomerase (352 aa).

It belongs to the QueA family. As to quaternary structure, monomer.

Its subcellular location is the cytoplasm. The enzyme catalyses 7-aminomethyl-7-carbaguanosine(34) in tRNA + S-adenosyl-L-methionine = epoxyqueuosine(34) in tRNA + adenine + L-methionine + 2 H(+). It functions in the pathway tRNA modification; tRNA-queuosine biosynthesis. In terms of biological role, transfers and isomerizes the ribose moiety from AdoMet to the 7-aminomethyl group of 7-deazaguanine (preQ1-tRNA) to give epoxyqueuosine (oQ-tRNA). The polypeptide is S-adenosylmethionine:tRNA ribosyltransferase-isomerase (Solibacter usitatus (strain Ellin6076)).